The chain runs to 403 residues: Acetylornithine/succinyldiaminopimelate aminotransferase (403 aa).

Residues 107–108 and F140 each bind pyridoxal 5'-phosphate; that span reads GA. R143 lines the N(2)-acetyl-L-ornithine pocket. Residue 225-228 coordinates pyridoxal 5'-phosphate; it reads DEVQ. N6-(pyridoxal phosphate)lysine is present on K254. N(2)-acetyl-L-ornithine is bound at residue T282. Pyridoxal 5'-phosphate is bound at residue T283.

This sequence belongs to the class-III pyridoxal-phosphate-dependent aminotransferase family. ArgD subfamily. Homodimer. Pyridoxal 5'-phosphate is required as a cofactor.

It is found in the cytoplasm. The enzyme catalyses N(2)-acetyl-L-ornithine + 2-oxoglutarate = N-acetyl-L-glutamate 5-semialdehyde + L-glutamate. It carries out the reaction N-succinyl-(2S,6S)-2,6-diaminopimelate + 2-oxoglutarate = (S)-2-succinylamino-6-oxoheptanedioate + L-glutamate. The protein operates within amino-acid biosynthesis; L-arginine biosynthesis; N(2)-acetyl-L-ornithine from L-glutamate: step 4/4. Its pathway is amino-acid biosynthesis; L-lysine biosynthesis via DAP pathway; LL-2,6-diaminopimelate from (S)-tetrahydrodipicolinate (succinylase route): step 2/3. In terms of biological role, involved in both the arginine and lysine biosynthetic pathways. The chain is Acetylornithine/succinyldiaminopimelate aminotransferase from Photorhabdus laumondii subsp. laumondii (strain DSM 15139 / CIP 105565 / TT01) (Photorhabdus luminescens subsp. laumondii).